We begin with the raw amino-acid sequence, 221 residues long: MRIFNQTEIRIIGCLIEKEVTTPEQYPLTLNALTTACNQKSNRDPVTSMSDSDVLDSLNTLVSERVVTDETRGNSRVAKYQHRFCNTEFGSLKLSKQEMAVLCVLFLRGPQTPGELRTRTQRLCEFDNVAEVESVLTTLGLSEASPMVTKLEKEPGKREARYAHLFCGEVINDVTVVDKTNVTNHSNSTENDERITLLESEVAELKAEMAQLTQLVNDLLA.

The protein belongs to the UPF0502 family.

The chain is UPF0502 protein VSAL_II0605 from Aliivibrio salmonicida (strain LFI1238) (Vibrio salmonicida (strain LFI1238)).